The sequence spans 944 residues: MSDLVMFEPGASTSTDVPTNTDQTAMSTTQVVDALECDTFEGLMNVNETYVEILDSALLSVQQHLDDNLKRQQQLKEEYRLYNRADITKRKVPVHLYMPPYFKDDNNMYPPMSSEAREKQVLKWFDPMMKEEKKWTPSEIKTLRTSVKNALVAHQVQPWCSRRDIVASKLRDADITTSNFDRRQWTMELEDLMRKIAYVREKSEEEVLTASADYTVVPWTAIANFDFKGSRTEWAVKSKWYNELNPKWNKEHWSNEEVEKLKYLRESPKFVSWPMLALNLGTNRTSYQCMEKYKTEVSQHSKEWSQDEDTKLIALTKITSINGHIQWDKVAQCMPGRTRQQVRTRFSHTLDASVKHGRWTDQEDVLLVCAVSRYGAKDWAKVAQAVQNRNDSQCRERWTNVLNRSAHVNERFTLVEDEQLLYAVKVFGKGNWAKCQMLLPKKTSRQLRRRYLQLIAAKLRLAAGFCNAVDAMKSGRRAPEEDELEQEDIVEAEQIPNELMKEVYEKFANENPDMNETPEEFYKRVSALERPAAARIRALKNKPDYQKIQDKINEIVQKHKNAAEIDKELHSSEILSSLTITEVDVRYMIERSKTLTRYYEARQFRKNVDQIGCRVRPIKIDLDPETMPTFDPNDAEDEKQMVIVESLCSVIRAHDVKEWGTKFWNEHRFTAPKYAKRFVENMVINKSKEVAEWYLHVNSKSCNQNDVHCPAKSTLPPTAASFDLHKMLQKARSGLNRLSAEHFYPLDVSLAQQFNFKNDEREGLDGDRRMHIGLSDEVTNSKEYANFYARMRSILLEPMRLGIARESSSDETKRLVRCLAEERACDEEQQVTCDQIRRRRMPDDEIYVTPTSISRELNNGMKIDTTELLANLDKNSAKKIRMKRKIGEVRCDTKIKLLPLVILATVATVAARPARPPRSSAGTPTPSHVSIDTESNISLKVELD.

A disordered region spans residues 1–22 (MSDLVMFEPGASTSTDVPTNTD). The span at 11–22 (ASTSTDVPTNTD) shows a compositional bias: polar residues. The 68-residue stretch at 177 to 244 (TSNFDRRQWT…AVKSKWYNEL (68 aa)) folds into the Myb-like 1 domain. In terms of domain architecture, HTH myb-type 1 spans 245–301 (NPKWNKEHWSNEEVEKLKYLRESPKFVSWPMLALNLGTNRTSYQCMEKYKTEVSQHS). The H-T-H motif DNA-binding region spans 273-297 (WPMLALNLGTNRTSYQCMEKYKTEV). Residues 304 to 350 (WSQDEDTKLIALTKITSINGHIQWDKVAQCMPGRTRQQVRTRFSHTL) form the Myb-like 2 domain. 2 HTH myb-type domains span residues 351 to 406 (DASV…NRSA) and 407 to 459 (HVNE…AAKL). 2 DNA-binding regions (H-T-H motif) span residues 379 to 402 (WAKV…TNVL) and 432 to 455 (WAKC…LQLI). A compositionally biased stretch (low complexity) spans 911–921 (ARPARPPRSSA). A disordered region spans residues 911–935 (ARPARPPRSSAGTPTPSHVSIDTES). Over residues 922–935 (GTPTPSHVSIDTES) the composition is skewed to polar residues.

In terms of tissue distribution, broadly expressed in all tissues, including head, vulva and tail.

Its subcellular location is the nucleus. In terms of biological role, binds to the promoter regions of RNA polymerase II and III small-nuclear RNA genes, type 3 RNA polymerase III non-coding RNA genes, small nucleolar RNAs and transfer RNA genes. Required for expression of mature 21U-RNAs. The polypeptide is snRNA-activating protein complex subunit 4 homolog (Caenorhabditis elegans).